A 352-amino-acid polypeptide reads, in one-letter code: Rhodopsin (352 aa).

The Extracellular portion of the chain corresponds to 1–36; it reads MNGTEGPFFYIPMVNTTGIVRSPYEYPQYYLVNPAA. Residues Asn2 and Asn15 are each glycosylated (N-linked (GlcNAc...) asparagine). A helical membrane pass occupies residues 37–61; sequence YAALGAYMFFLILTGFPINFLTLYV. Residues 62–73 lie on the Cytoplasmic side of the membrane; sequence TLEHKKLRTALN. The chain crosses the membrane as a helical span at residues 74–96; that stretch reads LILLNLAVADLFMVFGGFTTTMY. At 97–110 the chain is on the extracellular side; it reads TSMHGYFVLGRLGC. Cys110 and Cys187 are disulfide-bonded. A helical transmembrane segment spans residues 111 to 133; sequence NVEGFFATLGGEIALWSLVVLAV. The 'Ionic lock' involved in activated form stabilization signature appears at 134-136; the sequence is ERW. Residues 134 to 152 are Cytoplasmic-facing; the sequence is ERWVVVCKPISNFRFTENH. The helical transmembrane segment at 153 to 173 threads the bilayer; sequence AIMGVAFSWIMAATCAVPPLV. The Extracellular portion of the chain corresponds to 174-202; sequence GWSRYIPEGMQCSCGVDYYTRAEGFNNES. The chain crosses the membrane as a helical span at residues 203 to 224; that stretch reads FVIYMFIVHFLAPLIVIFFCYG. The Cytoplasmic segment spans residues 225 to 252; it reads RLLCAVKEAAAAQQESETTQRAEREVTR. A helical transmembrane segment spans residues 253-274; it reads MVIIMVIGFLTSWLPYASVAWY. At 275-286 the chain is on the extracellular side; the sequence is IFTHQGTEFGPL. A helical transmembrane segment spans residues 287–308; sequence FMTIPAFFAKSSALYNPMIYIC. Lys296 is subject to N6-(retinylidene)lysine. The Cytoplasmic segment spans residues 309-352; it reads MNKQFRHCMITTLCCGKNPFEEEEGASTTKTEASSVSSSSVSPA. 2 S-palmitoyl cysteine lipidation sites follow: Cys322 and Cys323. Positions 331-352 are disordered; it reads EEGASTTKTEASSVSSSSVSPA. Residues 342 to 352 are compositionally biased toward low complexity; sequence SSVSSSSVSPA.

It belongs to the G-protein coupled receptor 1 family. Opsin subfamily. Post-translationally, phosphorylated on some or all of the serine and threonine residues present in the C-terminal region. Contains one covalently linked retinal chromophore.

It is found in the membrane. The protein resides in the cell projection. It localises to the cilium. The protein localises to the photoreceptor outer segment. Photoreceptor required for image-forming vision at low light intensity. While most salt water fish species use retinal as chromophore, most freshwater fish use 3-dehydroretinal, or a mixture of retinal and 3-dehydroretinal. Light-induced isomerization of 11-cis to all-trans retinal triggers a conformational change that activates signaling via G-proteins. Subsequent receptor phosphorylation mediates displacement of the bound G-protein alpha subunit by arrestin and terminates signaling. The chain is Rhodopsin (rho) from Pomatoschistus minutus (Sand goby).